Reading from the N-terminus, the 239-residue chain is Large ribosomal subunit protein uL2 (239 aa).

Positions 202–239 (HGGGSHQHVGRPSTVARNTPPGRKVGHIAARRTGRRKG) are disordered. Positions 225–239 (KVGHIAARRTGRRKG) are enriched in basic residues.

It belongs to the universal ribosomal protein uL2 family. In terms of assembly, part of the 50S ribosomal subunit. Forms a bridge to the 30S subunit in the 70S ribosome.

One of the primary rRNA binding proteins. Required for association of the 30S and 50S subunits to form the 70S ribosome, for tRNA binding and peptide bond formation. It has been suggested to have peptidyltransferase activity; this is somewhat controversial. Makes several contacts with the 16S rRNA in the 70S ribosome. This Desulfurococcus amylolyticus (strain DSM 18924 / JCM 16383 / VKM B-2413 / 1221n) (Desulfurococcus kamchatkensis) protein is Large ribosomal subunit protein uL2.